The following is a 435-amino-acid chain: tRNA modification GTPase MnmE (435 aa).

The (6S)-5-formyl-5,6,7,8-tetrahydrofolate site is built by R20, E77, and K117. One can recognise a TrmE-type G domain in the interval 214-359 (GLKIVIAGAP…FIKKLESFCH (146 aa)). GTP contacts are provided by residues 224 to 229 (NSGKSS), 243 to 249 (TEEAGTT), and 268 to 271 (DTAG). 2 residues coordinate Mg(2+): S228 and T249. K435 lines the (6S)-5-formyl-5,6,7,8-tetrahydrofolate pocket.

Belongs to the TRAFAC class TrmE-Era-EngA-EngB-Septin-like GTPase superfamily. TrmE GTPase family. In terms of assembly, homodimer. Heterotetramer of two MnmE and two MnmG subunits. The cofactor is K(+).

The protein localises to the cytoplasm. In terms of biological role, exhibits a very high intrinsic GTPase hydrolysis rate. Involved in the addition of a carboxymethylaminomethyl (cmnm) group at the wobble position (U34) of certain tRNAs, forming tRNA-cmnm(5)s(2)U34. The polypeptide is tRNA modification GTPase MnmE (Bartonella tribocorum (strain CIP 105476 / IBS 506)).